Reading from the N-terminus, the 345-residue chain is Dihydroorotate dehydrogenase (quinone) (345 aa).

FMN-binding positions include 65-69 and Thr89; that span reads AGLDK. Lys69 lines the substrate pocket. 114–118 lines the substrate pocket; that stretch reads NRMGF. FMN-binding residues include Asn142 and Asn175. Position 175 (Asn175) interacts with substrate. The Nucleophile role is filled by Ser178. Position 180 (Asn180) interacts with substrate. The FMN site is built by Lys220 and Thr248. Residue 249-250 participates in substrate binding; sequence NT. FMN contacts are provided by residues Gly271, Gly300, and 321-322; that span reads YT.

The protein belongs to the dihydroorotate dehydrogenase family. Type 2 subfamily. In terms of assembly, monomer. The cofactor is FMN.

It is found in the cell membrane. It carries out the reaction (S)-dihydroorotate + a quinone = orotate + a quinol. The protein operates within pyrimidine metabolism; UMP biosynthesis via de novo pathway; orotate from (S)-dihydroorotate (quinone route): step 1/1. Catalyzes the conversion of dihydroorotate to orotate with quinone as electron acceptor. In Burkholderia lata (strain ATCC 17760 / DSM 23089 / LMG 22485 / NCIMB 9086 / R18194 / 383), this protein is Dihydroorotate dehydrogenase (quinone).